The sequence spans 376 residues: WW domain-binding protein 4 (376 aa).

A Matrin-type zinc finger spans residues Lys11–Lys42. Over residues Ile94 to Ser107 the composition is skewed to low complexity. 3 disordered regions span residues Ile94–Trp128, Ser189–Val335, and Phe356–Gln376. WW domains follow at residues Asp122–Gly155 and Thr163–Asp196. Residues Ser189 to Ile198 show a composition bias toward basic and acidic residues. Positions Asp203–Gly215 are enriched in polar residues. Basic and acidic residues-rich tracts occupy residues Asp218–Ser229 and Glu243–Asn257. A phosphoserine mark is found at Ser220, Ser227, and Ser229. Position 262 is a phosphoserine (Ser262). Residues Gln298–Glu309 are compositionally biased toward basic and acidic residues. Polar residues predominate over residues Ser316–Glu326. The segment at Lys357–Asp375 is interaction with SNRNP200. Residues Thr361 to Gln376 show a composition bias toward basic and acidic residues.

In terms of assembly, component of the spliceosome B complex. Associated with U2 snRNPs. Binds splicing factors SNRPB, SNRPC and SF1. Interacts via the WW domains with the Pro-rich domains of KHDRBS1/SAM68. Interacts via the WW domains with the Pro-rich domains of WBP11. Interacts with SNRNP200.

Its subcellular location is the nucleus. It localises to the nucleus speckle. Involved in pre-mRNA splicing as a component of the spliceosome. May play a role in cross-intron bridging of U1 and U2 snRNPs in the mammalian A complex. In Homo sapiens (Human), this protein is WW domain-binding protein 4 (WBP4).